The following is a 68-amino-acid chain: Pleurocidin-like peptide WF4 (68 aa).

An N-terminal signal peptide occupies residues 1–22 (MKFTATFLMMFIFVLMVEPGEC). A propeptide spanning residues 48–68 (GEQQDLDKRAVDEDPNVIVFE) is cleaved from the precursor.

Belongs to the pleurocidin family.

It is found in the secreted. Functionally, antimicrobial peptide. In Pseudopleuronectes americanus (Winter flounder), this protein is Pleurocidin-like peptide WF4 (ple4).